A 221-amino-acid polypeptide reads, in one-letter code: Molybdenum cofactor guanylyltransferase (221 aa).

GTP is bound by residues Ile18–Gly20, Lys35, Asn63, Asp81, and Asp112. Position 112 (Asp112) interacts with Mg(2+).

It belongs to the MobA family. As to quaternary structure, monomer. Requires Mg(2+) as cofactor.

The protein resides in the cytoplasm. The catalysed reaction is Mo-molybdopterin + GTP + H(+) = Mo-molybdopterin guanine dinucleotide + diphosphate. Transfers a GMP moiety from GTP to Mo-molybdopterin (Mo-MPT) cofactor (Moco or molybdenum cofactor) to form Mo-molybdopterin guanine dinucleotide (Mo-MGD) cofactor. The sequence is that of Molybdenum cofactor guanylyltransferase from Brucella melitensis biotype 2 (strain ATCC 23457).